We begin with the raw amino-acid sequence, 110 residues long: UPF0145 protein (110 aa).

This sequence belongs to the UPF0145 family.

In Listeria welshimeri, this protein is UPF0145 protein.